The primary structure comprises 356 residues: Protein pelota homolog (356 aa).

The protein belongs to the eukaryotic release factor 1 family. Pelota subfamily. In terms of assembly, monomer. The cofactor is a divalent metal cation.

It is found in the cytoplasm. In terms of biological role, may function in recognizing stalled ribosomes, interact with stem-loop structures in stalled mRNA molecules, and effect endonucleolytic cleavage of the mRNA. May play a role in the release non-functional ribosomes and degradation of damaged mRNAs. Has endoribonuclease activity. The protein is Protein pelota homolog of Desulfurococcus amylolyticus (strain DSM 18924 / JCM 16383 / VKM B-2413 / 1221n) (Desulfurococcus kamchatkensis).